The primary structure comprises 1300 residues: Insulin receptor-related protein (1300 aa).

An N-terminal signal peptide occupies residues 1–26; that stretch reads MARPKLWPWGILLLVSLLSAGFNLDT. Residue N47 is glycosylated (N-linked (GlcNAc...) asparagine). Cystine bridges form between C214–C222, C216–C228, C229–C237, C233–C246, C249–C258, C262–C274, C280–C300, C304–C317, and C320–C324. Residue N311 is glycosylated (N-linked (GlcNAc...) asparagine). Residues N411, N492, N528, N616, N634, N756, N885, and N898 are each glycosylated (N-linked (GlcNAc...) asparagine). 2 Fibronectin type-III domains span residues 483–603 and 607–707; these read QTRT…TLPA and VPQD…AQEA. C657 and C864 are joined by a disulfide. The segment at 740-762 is disordered; sequence DAGRHRRAIGSPRPGGNSSDFEI. Residues 747-921 are Extracellular-facing; the sequence is AIGSPRPGGN…PEEEDSGGLH (175 aa). The region spanning 818–912 is the Fibronectin type-III 3 domain; that stretch reads IPGKLSWEAA…DSVAFYIPGP (95 aa). Residues 922-943 form a helical membrane-spanning segment; it reads ILLTVTPAGLMLLIILAALGFF. The Cytoplasmic portion of the chain corresponds to 944-1300; sequence YSRKRNGTLY…CSLQNGGPEH (357 aa). A Protein kinase domain is found at 979 to 1254; that stretch reads ISIIRELGQG…SIQKELRPSF (276 aa). ATP is bound by residues 985–993 and K1013; that span reads LGQGSFGMV. D1115 functions as the Proton acceptor in the catalytic mechanism. Phosphotyrosine; by autocatalysis is present on residues Y1145 and Y1146. The disordered stretch occupies residues 1270-1300; it reads GLQPTTDAESSSPPTSKGASDCSLQNGGPEH. Over residues 1272–1300 the composition is skewed to polar residues; sequence QPTTDAESSSPPTSKGASDCSLQNGGPEH.

The protein belongs to the protein kinase superfamily. Tyr protein kinase family. Insulin receptor subfamily. Probable tetramer of 2 alpha and 2 beta chains linked by disulfide bonds. The alpha chains contribute to the formation of the ligand-binding domain, while the beta chains carry the kinase domain. Autophosphorylated on tyrosine residues between pH 7.9 and pH 10.5.

It is found in the membrane. The enzyme catalyses L-tyrosyl-[protein] + ATP = O-phospho-L-tyrosyl-[protein] + ADP + H(+). Receptor with tyrosine-protein kinase activity. Functions as a pH sensing receptor which is activated by increased extracellular pH. Activates an intracellular signaling pathway that involves IRS1 and AKT1/PKB. In Cavia porcellus (Guinea pig), this protein is Insulin receptor-related protein (INSRR).